The following is a 121-amino-acid chain: uncharacterized protein (121 aa).

The interval lysine 100 to serine 121 is disordered.

This is an uncharacterized protein from Mycoplasma pneumoniae (strain ATCC 29342 / M129 / Subtype 1) (Mycoplasmoides pneumoniae).